The sequence spans 586 residues: Madf and zinc finger protein 1 (586 aa).

Residues 161–194 form an involved in interaction with Cp190 region; that stretch reads FMSEDDLAPPRKPGRPPRRTRPGQVFKFKVSFIR. The segment at residues 201–292 is a DNA-binding region (MADF 1); that stretch reads HLIQAYKEHP…KCEFLSVAPV (92 aa). Positions 294–319 are involved in interaction with Cp190; the sequence is TPRENEEDNDLTAIKLNFKEENLITT. Residues 320 to 413 constitute a DNA-binding region (MADF 2); that stretch reads SFIETYANYP…MCSFLPAKGS (94 aa). 6 consecutive C2H2-type zinc fingers follow at residues 418–441, 448–471, 476–498, 504–527, 533–555, and 561–583; these read LYCD…VKAH, YLCS…LRSH, LKCQ…TLIH, HVCD…NGVH, YSCN…IKGH, and KKCE…RRSH.

As to quaternary structure, interacts (via regions flanking MADF domain 1) with Cp190 (via regions between the BTB domain and first zinc finger domain); the interaction is probably direct and is essential for protein function.

Its subcellular location is the nucleus. The protein resides in the chromosome. It localises to the nucleoplasm. Its function is as follows. Chromatin-binding protein involved in the organization of active promoters and insulators. Essential for the activity of heterochromatin promoters; primarily binds to specific motifs within promoters of housekeeping genes. May also associate to a lesser extent with promoters in euchromatin. Mediates recruitment of Cp190, a multifunctional protein involved in the recruitment of transcription complexes, the creation of open chromatin regions and the activity of insulators. Cooperates with pita and su(Hw) to recruit Cp190 and regulate insulator function at the front-ultraabdominal (Fub) boundary. May cooperate with other C2H2 zinc finger proteins, such as M1BP, to recruit CP190 to promoters. May be involved in cellular organization and development of the eye. The protein is Madf and zinc finger protein 1 of Drosophila melanogaster (Fruit fly).